The primary structure comprises 150 residues: Ribonuclease H (150 aa).

The region spanning 2–143 is the RNase H type-1 domain; sequence PAPILDIFVD…ADELANRAIE (142 aa). 4 residues coordinate Mg(2+): D11, E49, D71, and D135.

This sequence belongs to the RNase H family. Monomer. Requires Mg(2+) as cofactor.

It localises to the cytoplasm. It carries out the reaction Endonucleolytic cleavage to 5'-phosphomonoester.. In terms of biological role, endonuclease that specifically degrades the RNA of RNA-DNA hybrids. The protein is Ribonuclease H of Dichelobacter nodosus (strain VCS1703A).